Here is a 178-residue protein sequence, read N- to C-terminus: Large ribosomal subunit protein bL25 (178 aa).

Belongs to the bacterial ribosomal protein bL25 family. CTC subfamily. Part of the 50S ribosomal subunit; part of the 5S rRNA/L5/L18/L25 subcomplex. Contacts the 5S rRNA. Binds to the 5S rRNA independently of L5 and L18.

Its function is as follows. This is one of the proteins that binds to the 5S RNA in the ribosome where it forms part of the central protuberance. The polypeptide is Large ribosomal subunit protein bL25 (Helicobacter pylori (strain ATCC 700392 / 26695) (Campylobacter pylori)).